Reading from the N-terminus, the 405-residue chain is Accessory Sec system protein translocase subunit SecY2 (405 aa).

Helical transmembrane passes span Met14–Val34, Leu65–Phe85, Met104–Val124, Phe131–Leu151, Ala156–Pro176, Leu190–Phe210, Gly243–Leu263, Pro285–Val305, Phe343–Leu363, and Leu368–Ile388.

It belongs to the SecY/SEC61-alpha family. SecY2 subfamily. As to quaternary structure, component of the accessory SecA2/SecY2 protein translocase complex required to export cell wall proteins. May form heterotrimers with SecE and SecG subunits.

The protein localises to the cell membrane. In terms of biological role, part of the accessory SecA2/SecY2 system specifically required for export of possible cell wall proteins. The central subunit of a protein translocation channel. This is Accessory Sec system protein translocase subunit SecY2 from Streptococcus oralis (strain Uo5).